Consider the following 348-residue polypeptide: Transmembrane protease serine 12 (348 aa).

The N-terminal stretch at 1–20 (MRLGLLSVALLFVGSSHLYS) is a signal peptide. Residues 21 to 324 (DHYSPSGRHR…EHFFHASTQG (304 aa)) are Extracellular-facing. A disordered region spans residues 24-46 (SPSGRHRLGPSPEPAASSQQAEA). The Peptidase S1 domain maps to 78–318 (IIGGTEAQAG…YQKWLTEHFF (241 aa)). Cys107 and Cys123 form a disulfide bridge. Active-site charge relay system residues include His122 and Asp171. Intrachain disulfides connect Cys206/Cys274, Cys237/Cys253, and Cys264/Cys294. Residues Asn219 and Asn249 are each glycosylated (N-linked (GlcNAc...) asparagine). The active-site Charge relay system is the Ser268. Residues 325–345 (ILTINILRGQILIALCFVILL) traverse the membrane as a helical segment. At 346 to 348 (ATT) the chain is on the cytoplasmic side.

Belongs to the peptidase S1 family. In testis, expressed in spermatocytes and spermatids (at protein level).

It is found in the cell membrane. The protein localises to the cytoplasmic vesicle. The protein resides in the secretory vesicle. It localises to the acrosome. Required for male fertility. Plays a critical role in sperm capacitation and acrosome reactions during fertilization, and also plays a role in the regulation of proteins involved in spermatogenesis. Regulates protein pathways that promote chromosomal synapsis formation, double-strand break repair, formation of the inner mitochondrial membrane cristae and apoptosis in developing sperm. Required for normal sperm motility and binding to the zona pellucida, potentially via a role in ADAM3 protein maturation. The chain is Transmembrane protease serine 12 from Homo sapiens (Human).